A 491-amino-acid chain; its full sequence is Cytochrome P450 2K3 (491 aa).

Cys434 provides a ligand contact to heme.

The protein belongs to the cytochrome P450 family. Heme is required as a cofactor.

Its subcellular location is the endoplasmic reticulum membrane. It localises to the microsome membrane. The catalysed reaction is an organic molecule + reduced [NADPH--hemoprotein reductase] + O2 = an alcohol + oxidized [NADPH--hemoprotein reductase] + H2O + H(+). This chain is Cytochrome P450 2K3 (cyp2k3), found in Oncorhynchus mykiss (Rainbow trout).